Reading from the N-terminus, the 553-residue chain is Hydroxylamine reductase (553 aa).

Cysteine 3, cysteine 6, cysteine 18, and cysteine 25 together coordinate [2Fe-2S] cluster. 8 residues coordinate hybrid [4Fe-2O-2S] cluster: histidine 252, glutamate 276, cysteine 320, cysteine 408, cysteine 436, cysteine 461, glutamate 495, and lysine 497. Cysteine 408 bears the Cysteine persulfide mark.

This sequence belongs to the HCP family. The cofactor is [2Fe-2S] cluster. Hybrid [4Fe-2O-2S] cluster serves as cofactor.

Its subcellular location is the cytoplasm. It catalyses the reaction A + NH4(+) + H2O = hydroxylamine + AH2 + H(+). In terms of biological role, catalyzes the reduction of hydroxylamine to form NH(3) and H(2)O. This chain is Hydroxylamine reductase, found in Vibrio vulnificus (strain YJ016).